Here is a 481-residue protein sequence, read N- to C-terminus: MAENDVDRIQTEKLLKRVQELEQEVKRLKKEQANNKDSNIRENSSGAGGKPKRAFDFSAHGQRHVALKIAYLGWGYQGFASQENTSNTIEEKLFEALTKTRLVENRQTSNYHRCGRTDKGVSAFGQVISLDLRSHIPKGRDSEHFNLKNEVNDVATEIRYTHILNRVLPPDIRVLAWAPVETSFSARFSCLERTYRYFFPRANLDIVTMNYAAQKYVGTHDFRNLCKMDVANGVINFQRTILSAQVQRVGQNLGEEGWQEPFQLCQFEVTGQAFLYHQVRCMMAVLFLIGQGMEKPEVIDELLNIEKNPQKPQYSMAVEFPLVLYDCKFENIKWIYDREVQEFNVTHLQQLWANHAVKTQMLYSMLQGLDSVALPCGTGPKMDGMIEWRNVKPSVTKQTSAFVEGVKMRTYKPLMDRPKCQGLESRIQHFVRRGRIEHPHLFHEEETKAKRDCSDTLEEENTVFEKPMKRICVDTELKSII.

Position 2 is an N-acetylalanine (alanine 2). Over residues 29-40 (KKEQANNKDSNI) the composition is skewed to basic and acidic residues. Positions 29-54 (KKEQANNKDSNIRENSSGAGGKPKRA) are disordered. Catalysis depends on aspartate 118, which acts as the Nucleophile. Residue tyrosine 195 participates in substrate binding. Phosphothreonine is present on threonine 456.

This sequence belongs to the tRNA pseudouridine synthase TruA family.

It localises to the nucleus. The catalysed reaction is uridine(38/39) in tRNA = pseudouridine(38/39) in tRNA. Functionally, formation of pseudouridine at position 39 in the anticodon stem and loop of transfer RNAs. The polypeptide is tRNA pseudouridine(38/39) synthase (PUS3) (Bos taurus (Bovine)).